Reading from the N-terminus, the 286-residue chain is MNTVKTVRELRAAVARARSEGKRIGFVPTMGNLHSGHIALITKATQRVDFVVASIFVNPLQFGAGEDLDKYPRTLAADQEKLLEAGCDLLFAPTVEEMYPDGMAGQTRVSVPQLSEGLCGASRPGHFEGVATVVSKLFNMVQPDLAIFGQKDFQQLAVIRALVHDLNMPIQIIGEPTVRAADGLALSSRNGFLSEEERAVAPVVYRTLSSIAESIKQGERDFPALIQAQRQQLEAAGLRPDYLEIRHALTLRPATAEDRDLVILVAAFLGTTRLIDNLHLNLDTPA.

30–37 (MGNLHSGH) is a binding site for ATP. His37 acts as the Proton donor in catalysis. Residue Gln61 participates in (R)-pantoate binding. Gln61 provides a ligand contact to beta-alanine. An ATP-binding site is contributed by 149–152 (GQKD). Gln155 serves as a coordination point for (R)-pantoate. Residues Val178 and 186–189 (LSSR) contribute to the ATP site.

This sequence belongs to the pantothenate synthetase family. As to quaternary structure, homodimer.

The protein resides in the cytoplasm. The catalysed reaction is (R)-pantoate + beta-alanine + ATP = (R)-pantothenate + AMP + diphosphate + H(+). The protein operates within cofactor biosynthesis; (R)-pantothenate biosynthesis; (R)-pantothenate from (R)-pantoate and beta-alanine: step 1/1. Catalyzes the condensation of pantoate with beta-alanine in an ATP-dependent reaction via a pantoyl-adenylate intermediate. This Pseudomonas fluorescens (strain Pf0-1) protein is Pantothenate synthetase.